Consider the following 152-residue polypeptide: MFRGASAINLDTKGRIAIPARYREPLQLEHQGRIVITVDIQSACLLLYPIHEWELIEAKLLKLSDTDKTQRSLKRMLLGYAHEVELDGNGRILLPPPLRQYANLDKRIMLVGQLNKFELWDEQAWLQQIDECQETIRGEELANNERLADFSL.

SpoVT-AbrB domains are found at residues 5–52 (ASAI…PIHE) and 81–124 (AHEV…DEQA).

The protein belongs to the MraZ family. Forms oligomers.

The protein resides in the cytoplasm. The protein localises to the nucleoid. The sequence is that of Transcriptional regulator MraZ from Shewanella oneidensis (strain ATCC 700550 / JCM 31522 / CIP 106686 / LMG 19005 / NCIMB 14063 / MR-1).